The chain runs to 940 residues: MKTNNTFLSYFVCGFLLMGVGLGQNQTSEIKVGVVLDLNTTFSKICLTSIKMAVSDFYADHPNYLTRLTLHVRDSMEDTVQASAAALDLIKTEQVSAIIGPINSMQADFMIKLANKTQVPTITFSATSPLLTSIKSPYFVRATIDDSSQVRAIASIFKFFRWRRVVAIYVDNEFGEGFMPFLFDALQDVEVKRSVIPPEAIDDEIQKELRKLMERQARVFVVHMESSLALRVFQIARDIGMMEEGYVWLMTNGMTHMMRHINNGRSLNTIEGVLGVRSHVPKSKELGDFRLRWKRTFEKENPSMRDDLNVFALWAYDSITALAKAVEKANTKSLWYDNGSTLSKNRTDLGNVGVSLYGPSLQKAFSEVRFNGLAGEFKLIDGQLQSPKFEIINFVGNEERIIGFWTPRDGLMDATSSNKKTLGPVIWPGKSKIVPKGWEIPGKKLRVGVPMKKGFFDFVKVTINPITNKKTPTGYAIEIFEAALKELPYLVIPEYVSFESPNNYNNLVYQVYDKTWDAVVGDITITANRSLYADFTLPFTESGVSMMVPVRDNENKDTWVFLEPWSLELWVTTGCFFVFIGFVVWLFEHRVNTDFRGPPQYQIGTSLWFSFSTMVFAHRENVVSNLARFVVVVWCFVVLVLTQSYTASLTSFLTVQSLQPTVTNVNDLIKNRDCVGYQGGAFVKDILLGLGFHEDQLKPFDSAKDADDLLSKGKSKGIAAAFDEVAYLKAILSQSCSKYVMVEPTFKTGGFGFAFPKNSPLTGEFSRAILNLTQNNVTQQIEDRWFPKKNDCPDPMTALSSNRLNLSSFLGLFLIAGTAISFSLLVFVALFLYEHRHTLGDDSEDSLWRKLKFLFKIFDEKDMNSHTFKNSAIHNISSPMTHKTPSPSTVQITPWPQSPSQNREFELRRVSFSPSEERFTTQPIIHHEDGESDIECRVEQ.

Residues 1 to 23 (MKTNNTFLSYFVCGFLLMGVGLG) form the signal peptide. The Extracellular portion of the chain corresponds to 24 to 566 (QNQTSEIKVG…DTWVFLEPWS (543 aa)). N-linked (GlcNAc...) asparagine glycosylation is found at Asn-25, Asn-39, Asn-115, Asn-338, Asn-345, and Asn-528. Residues 567–587 (LELWVTTGCFFVFIGFVVWLF) traverse the membrane as a helical segment. The Cytoplasmic portion of the chain corresponds to 588–596 (EHRVNTDFR). A helical membrane pass occupies residues 597–617 (GPPQYQIGTSLWFSFSTMVFA). Over 618–628 (HRENVVSNLAR) the chain is Cytoplasmic. The helical transmembrane segment at 629–649 (FVVVVWCFVVLVLTQSYTASL) threads the bilayer. At 650–811 (TSFLTVQSLQ…NRLNLSSFLG (162 aa)) the chain is on the extracellular side. N-linked (GlcNAc...) asparagine glycosylation is found at Asn-771, Asn-776, and Asn-805. The chain crosses the membrane as a helical span at residues 812-832 (LFLIAGTAISFSLLVFVALFL). The Cytoplasmic segment spans residues 833 to 940 (YEHRHTLGDD…ESDIECRVEQ (108 aa)). Disordered regions lie at residues 876-900 (ISSPMTHKTPSPSTVQITPWPQSPS) and 914-940 (PSEERFTTQPIIHHEDGESDIECRVEQ).

This sequence belongs to the glutamate-gated ion channel (TC 1.A.10.1) family. May form heteromers. In terms of tissue distribution, expressed predominantly in roots.

The protein localises to the membrane. In terms of biological role, glutamate-gated receptor that probably acts as a non-selective cation channel. May be involved in light-signal transduction and calcium homeostasis via the regulation of calcium influx into cells. This is Glutamate receptor 2.9 (GLR2.9) from Arabidopsis thaliana (Mouse-ear cress).